Here is a 201-residue protein sequence, read N- to C-terminus: MLAKKHGYRSRSAYKLIDIDCKFKLLQRGRYVLDLGSCPGGWAQVAAERVAEGGKAHVVAVDMAPMERIPNVDFVQCDVEHSPELLRAALQDRKFDVVLSDMAPKSCGHRQVDHANIINLCEMALDLAVEFLRSGGSFVTKILQGEYEQEFRRSLQYYFASVTYFKPKSSRSESSEIYLVGTKFKNPEHPYGNSEDAPSEC.

5 residues coordinate S-adenosyl-L-methionine: Gly-40, Trp-42, Asp-62, Asp-78, and Asp-101. Lys-141 (proton acceptor) is an active-site residue.

Belongs to the class I-like SAM-binding methyltransferase superfamily. RNA methyltransferase RlmE family.

The protein resides in the cytoplasm. The catalysed reaction is uridine(2552) in 23S rRNA + S-adenosyl-L-methionine = 2'-O-methyluridine(2552) in 23S rRNA + S-adenosyl-L-homocysteine + H(+). In terms of biological role, specifically methylates the uridine in position 2552 of 23S rRNA at the 2'-O position of the ribose in the fully assembled 50S ribosomal subunit. In Anaplasma marginale (strain Florida), this protein is Ribosomal RNA large subunit methyltransferase E.